A 320-amino-acid chain; its full sequence is Nucleoporin Nup37 (320 aa).

4 WD repeats span residues 67–113 (KEQR…FTSL), 118–157 (GHGD…ENVI), 160–200 (GLSS…TVIS), and 203–242 (SPKF…VPAD).

It is found in the nucleus. The protein localises to the nuclear pore complex. In terms of biological role, as part of the nuclear pore complex (NPC), has a role in its assembly and function. Functionally, (Microbial infection) Required for optimal replication of E.chaffeensis. This Drosophila melanogaster (Fruit fly) protein is Nucleoporin Nup37.